Consider the following 547-residue polypeptide: Collagen EMF1-alpha (547 aa).

Disordered stretches follow at residues 1-99 (GVPG…APGV) and 116-311 (GPDG…GGGI). Residues 1 to 280 (GVPGPNGDVG…QGPRGGQGPK (280 aa)) are triple-helical region. 2 stretches are compositionally biased toward low complexity: residues 27 to 69 (QGPD…IRGQ) and 160 to 175 (QGSK…VGPQ). Allysine is present on K187. The segment covering 219-228 (VKGEKGEVGD) has biased composition (basic and acidic residues). Positions 246 to 271 (DAGPAGPIGDAGIQGPPGQDGPTGAQ) are enriched in low complexity. Positions 272-281 (GPRGGQGPKG) are enriched in gly residues. The interval 308–336 (GGGIILVPVNDQNPTRSPVSGSVFYRGQA) is telopeptide. A propeptide spans 337 to 547 (EETDVNLGSV…GFEMGPACFY (211 aa)) (C-terminal propeptide). One can recognise a Fibrillar collagen NC1 domain in the interval 343–547 (LGSVADVIEL…GFEMGPACFY (205 aa)). Residues N381 and N406 are each glycosylated (N-linked (GlcNAc...) asparagine).

Belongs to the fibrillar collagen family.

It localises to the secreted. It is found in the extracellular space. Its subcellular location is the extracellular matrix. This Ephydatia muelleri (Mueller's freshwater sponge) protein is Collagen EMF1-alpha (COLF1).